Reading from the N-terminus, the 283-residue chain is tRNA-cytidine(32) 2-sulfurtransferase (283 aa).

A PP-loop motif motif is present at residues 32–37 (SGGKDS). Cys-107, Cys-110, and Cys-198 together coordinate [4Fe-4S] cluster.

Belongs to the TtcA family. In terms of assembly, homodimer. Mg(2+) is required as a cofactor. [4Fe-4S] cluster serves as cofactor.

It is found in the cytoplasm. It catalyses the reaction cytidine(32) in tRNA + S-sulfanyl-L-cysteinyl-[cysteine desulfurase] + AH2 + ATP = 2-thiocytidine(32) in tRNA + L-cysteinyl-[cysteine desulfurase] + A + AMP + diphosphate + H(+). It functions in the pathway tRNA modification. Catalyzes the ATP-dependent 2-thiolation of cytidine in position 32 of tRNA, to form 2-thiocytidine (s(2)C32). The sulfur atoms are provided by the cysteine/cysteine desulfurase (IscS) system. This Sorangium cellulosum (strain So ce56) (Polyangium cellulosum (strain So ce56)) protein is tRNA-cytidine(32) 2-sulfurtransferase.